The sequence spans 744 residues: Cytoskeleton-associated protein 2-like (744 aa).

Disordered regions lie at residues 35 to 56, 76 to 169, 182 to 216, 317 to 337, and 428 to 452; these read YLKA…GPKK, LQSR…THVE, KENL…SSLA, TVTE…VLQG, and NKTA…GAQT. Composition is skewed to polar residues over residues 76 to 86, 102 to 129, and 137 to 154; these read LQSRPANITRS, SESV…STDG, and GSLN…VTDQ. Lysine 195 participates in a covalent cross-link: Glycyl lysine isopeptide (Lys-Gly) (interchain with G-Cter in SUMO1); alternate. Lysine 195 is covalently cross-linked (Glycyl lysine isopeptide (Lys-Gly) (interchain with G-Cter in SUMO2); alternate). Residues 199–216 are compositionally biased toward polar residues; the sequence is ESWTINKPQTNQTKSSLA. At serine 744 the chain carries Phosphoserine.

It belongs to the CKAP2 family. Ubiquitinated by the anaphase promoting complex/cyclosome (APC/C).

The protein resides in the cytoplasm. It localises to the cytoskeleton. The protein localises to the spindle pole. Its function is as follows. Microtubule-associated protein required for mitotic spindle formation and cell-cycle progression in neural progenitor cells. The protein is Cytoskeleton-associated protein 2-like (CKAP2L) of Bos taurus (Bovine).